The primary structure comprises 441 residues: Glutamyl-tRNA reductase (441 aa).

Residues 47-50 (TCNR), Ser-104, 109-111 (EAQ), and Gln-115 contribute to the substrate site. The Nucleophile role is filled by Cys-48. 184 to 189 (GAGEMG) serves as a coordination point for NADP(+).

It belongs to the glutamyl-tRNA reductase family. Homodimer.

The enzyme catalyses (S)-4-amino-5-oxopentanoate + tRNA(Glu) + NADP(+) = L-glutamyl-tRNA(Glu) + NADPH + H(+). It participates in porphyrin-containing compound metabolism; protoporphyrin-IX biosynthesis; 5-aminolevulinate from L-glutamyl-tRNA(Glu): step 1/2. In terms of biological role, catalyzes the NADPH-dependent reduction of glutamyl-tRNA(Glu) to glutamate 1-semialdehyde (GSA). This Myxococcus xanthus (strain DK1622) protein is Glutamyl-tRNA reductase.